The chain runs to 432 residues: Adenylosuccinate synthetase (432 aa).

GTP is bound by residues 12-18 and 40-42; these read GDEGKGK and GHT. The Proton acceptor role is filled by aspartate 13. Residues aspartate 13 and glycine 40 each contribute to the Mg(2+) site. Residues 13-16, 38-41, threonine 131, arginine 145, glutamine 226, threonine 241, and arginine 305 contribute to the IMP site; these read DEGK and NAGH. Histidine 41 acts as the Proton donor in catalysis. 301-307 is a binding site for substrate; it reads ATTGRPR. GTP contacts are provided by residues arginine 307, 333 to 335, and 415 to 417; these read KLD and STG.

This sequence belongs to the adenylosuccinate synthetase family. In terms of assembly, homodimer. Requires Mg(2+) as cofactor.

It localises to the cytoplasm. It catalyses the reaction IMP + L-aspartate + GTP = N(6)-(1,2-dicarboxyethyl)-AMP + GDP + phosphate + 2 H(+). Its pathway is purine metabolism; AMP biosynthesis via de novo pathway; AMP from IMP: step 1/2. Functionally, plays an important role in the de novo pathway of purine nucleotide biosynthesis. Catalyzes the first committed step in the biosynthesis of AMP from IMP. In Magnetococcus marinus (strain ATCC BAA-1437 / JCM 17883 / MC-1), this protein is Adenylosuccinate synthetase.